Consider the following 188-residue polypeptide: Elongation factor P (188 aa).

This sequence belongs to the elongation factor P family.

The protein localises to the cytoplasm. The protein operates within protein biosynthesis; polypeptide chain elongation. Its function is as follows. Involved in peptide bond synthesis. Stimulates efficient translation and peptide-bond synthesis on native or reconstituted 70S ribosomes in vitro. Probably functions indirectly by altering the affinity of the ribosome for aminoacyl-tRNA, thus increasing their reactivity as acceptors for peptidyl transferase. The polypeptide is Elongation factor P (Rhodopseudomonas palustris (strain HaA2)).